Consider the following 346-residue polypeptide: MEKLARQQIQALTPYLSARRIGGSGDVWLNANESPFNNEYKTDFARLNRYSDCQPKAMIQAYANYAGVQPEQVLTSRGADEGIELLIRAFCEPNQDVILFCPPTYGMYAISAETFGVERKKVPLTTDWQLDLPSIEANLDRVKLVFVCSPNNPTGNLVKRADIIKLLEMTQDRAIVVMDEAYIDFCPEASTVDLLAQYPNLAILRTLSKAFALAGLRCGFTLANAELINVLLKVIAPYPVPVPVAEIAVQALSPAGLARAKYQVLDLGANRAYLQVGLSMVPGVQVFEGWGNYLLVKFPDGDALFKAAWEHGIILRNSPIENCVRISVGNREECEKTVAFIRNYYQ.

K209 bears the N6-(pyridoxal phosphate)lysine mark.

This sequence belongs to the class-II pyridoxal-phosphate-dependent aminotransferase family. Histidinol-phosphate aminotransferase subfamily. Homodimer. The cofactor is pyridoxal 5'-phosphate.

It carries out the reaction L-histidinol phosphate + 2-oxoglutarate = 3-(imidazol-4-yl)-2-oxopropyl phosphate + L-glutamate. Its pathway is amino-acid biosynthesis; L-histidine biosynthesis; L-histidine from 5-phospho-alpha-D-ribose 1-diphosphate: step 7/9. The sequence is that of Histidinol-phosphate aminotransferase from Vibrio cholerae serotype O1 (strain ATCC 39315 / El Tor Inaba N16961).